A 599-amino-acid polypeptide reads, in one-letter code: Elongation factor 4 (599 aa).

Positions 2–184 constitute a tr-type G domain; that stretch reads NHIRNFSIIA…RLVRDIPAPE (183 aa). GTP is bound by residues 14–19 and 131–134; these read DHGKST and NKID.

This sequence belongs to the TRAFAC class translation factor GTPase superfamily. Classic translation factor GTPase family. LepA subfamily.

Its subcellular location is the cell inner membrane. The enzyme catalyses GTP + H2O = GDP + phosphate + H(+). Its function is as follows. Required for accurate and efficient protein synthesis under certain stress conditions. May act as a fidelity factor of the translation reaction, by catalyzing a one-codon backward translocation of tRNAs on improperly translocated ribosomes. Back-translocation proceeds from a post-translocation (POST) complex to a pre-translocation (PRE) complex, thus giving elongation factor G a second chance to translocate the tRNAs correctly. Binds to ribosomes in a GTP-dependent manner. This chain is Elongation factor 4, found in Yersinia pestis (strain Pestoides F).